The following is a 132-amino-acid chain: Fluoride-specific ion channel FluC 2 (132 aa).

Helical transmembrane passes span 5 to 25 (VAVFIGGAIGSLLRYAVNLLG), 34 to 54 (TFIENTSGSLLLGLLTGFFAA), 59 to 79 (PLVQLCLGTGFCGGYTTMSAF), and 95 to 115 (VLYLMASLACGVCFAFLGIVI). Residues Gly-71 and Thr-74 each coordinate Na(+).

Belongs to the fluoride channel Fluc/FEX (TC 1.A.43) family.

The protein localises to the cell membrane. It carries out the reaction fluoride(in) = fluoride(out). Its activity is regulated as follows. Na(+) is not transported, but it plays an essential structural role and its presence is essential for fluoride channel function. In terms of biological role, fluoride-specific ion channel. Important for reducing fluoride concentration in the cell, thus reducing its toxicity. This is Fluoride-specific ion channel FluC 2 from Bacillus licheniformis (strain ATCC 14580 / DSM 13 / JCM 2505 / CCUG 7422 / NBRC 12200 / NCIMB 9375 / NCTC 10341 / NRRL NRS-1264 / Gibson 46).